A 508-amino-acid polypeptide reads, in one-letter code: 2,3-bisphosphoglycerate-independent phosphoglycerate mutase (508 aa).

Residues Asp-9 and Ser-59 each contribute to the Mn(2+) site. Ser-59 (phosphoserine intermediate) is an active-site residue. Residues His-120, 149-150 (RD), Arg-181, Arg-187, 254-257 (RADR), and Lys-331 contribute to the substrate site. Residues Asp-398, His-402, Asp-439, His-440, and His-456 each contribute to the Mn(2+) site.

It belongs to the BPG-independent phosphoglycerate mutase family. The cofactor is Mn(2+).

The catalysed reaction is (2R)-2-phosphoglycerate = (2R)-3-phosphoglycerate. Its pathway is carbohydrate degradation; glycolysis; pyruvate from D-glyceraldehyde 3-phosphate: step 3/5. In terms of biological role, catalyzes the interconversion of 2-phosphoglycerate and 3-phosphoglycerate. This Halobacterium salinarum (strain ATCC 700922 / JCM 11081 / NRC-1) (Halobacterium halobium) protein is 2,3-bisphosphoglycerate-independent phosphoglycerate mutase.